We begin with the raw amino-acid sequence, 141 residues long: Alpha-lactalbumin (141 aa).

Residues 1 to 19 form the signal peptide; that stretch reads MMSFVSLLVVGILFPAIQA. The C-type lysozyme domain occupies 20–141; sequence KQFTKCELSQ…KLDQWLCEKM (122 aa). 4 disulfide bridges follow: Cys-25–Cys-138, Cys-47–Cys-129, Cys-80–Cys-95, and Cys-91–Cys-109. Lys-97, Asp-100, Asp-102, Asp-105, and Asp-106 together coordinate Ca(2+).

It belongs to the glycosyl hydrolase 22 family. In terms of assembly, lactose synthase (LS) is a heterodimer of a catalytic component, beta1,4-galactosyltransferase (beta4Gal-T1) and a regulatory component, alpha-lactalbumin (LA). Mammary gland specific. Secreted in milk.

The protein resides in the secreted. Its function is as follows. Regulatory subunit of lactose synthase, changes the substrate specificity of galactosyltransferase in the mammary gland making glucose a good acceptor substrate for this enzyme. This enables LS to synthesize lactose, the major carbohydrate component of milk. In other tissues, galactosyltransferase transfers galactose onto the N-acetylglucosamine of the oligosaccharide chains in glycoproteins. This is Alpha-lactalbumin (LALBA) from Sus scrofa (Pig).